The chain runs to 168 residues: Sperm acrosome-associated protein 9 (168 aa).

As to quaternary structure, microtubule inner protein component of sperm flagellar doublet microtubules. Interacts with CABP1 and CALR. Interacts with INCA1. Interacts with microtubules. In terms of tissue distribution, expressed in sperm (at protein level). Expressed from almost all the cell types of testis, with abundant expression in round and elongated spermatids (at protein level). Predominantly expressed in tissues containing motile cilia.

It is found in the cytoplasm. The protein resides in the cytoplasmic vesicle. Its subcellular location is the secretory vesicle. The protein localises to the acrosome. It localises to the cytoskeleton. It is found in the cilium basal body. The protein resides in the flagellum axoneme. Its subcellular location is the cilium axoneme. The protein localises to the nucleus. Functionally, microtubule inner protein (MIP) part of the dynein-decorated doublet microtubules (DMTs) of multiciliated respiratory cells and the distal singlet microtubules of monoflagellated spermatozoa. Forms an extensive interaction network cross-linking the lumen of axonemal doublet microtubules. This chain is Sperm acrosome-associated protein 9, found in Mus musculus (Mouse).